The chain runs to 468 residues: Glutamate--tRNA ligase (468 aa).

Positions Pro8–Gly18 match the 'HIGH' region motif. Zn(2+)-binding residues include Cys97, Cys99, Cys124, and Asp126. The 'KMSKS' region signature appears at Lys236–Arg240. Lys239 provides a ligand contact to ATP.

Belongs to the class-I aminoacyl-tRNA synthetase family. Glutamate--tRNA ligase type 1 subfamily. As to quaternary structure, monomer. It depends on Zn(2+) as a cofactor.

Its subcellular location is the cytoplasm. The catalysed reaction is tRNA(Glu) + L-glutamate + ATP = L-glutamyl-tRNA(Glu) + AMP + diphosphate. In terms of biological role, catalyzes the attachment of glutamate to tRNA(Glu) in a two-step reaction: glutamate is first activated by ATP to form Glu-AMP and then transferred to the acceptor end of tRNA(Glu). The chain is Glutamate--tRNA ligase from Francisella tularensis subsp. novicida (strain U112).